The primary structure comprises 327 residues: MDKVLHATSLPILPGAIMSKNDAPEVEQLFKENGRLYQVWPRDRYLLPADQTEQDRLDIFSQLFKIILKEKLHTDASRVEENSHVLDLGCGTGLWVILMAHELHPKPSLFIGADVQMTQPDLIPATVRFTPADIEAPWTDEMVQHAPYDLINCRLMKGAIRSWPALYEKIAAHLKPETGVFEQFEIDWQFRCDDGPIPPALKQWSDEVMQAMDQHGMSIRCNREETRSMLLNHGFDDVQEQAIVLPISNWAEDERGREIGRWFNLALNHSTLPMSLAPLFRVMKKTPQYIDELNKAASREVCSQAHTDGVYCMLYIWTARTRPSRRR.

It belongs to the methyltransferase superfamily. LaeA methyltransferase family.

Its subcellular location is the nucleus. It catalyses the reaction L-methionyl-[protein] + S-adenosyl-L-methionine = S-methyl-L-methionyl-[protein] + S-adenosyl-L-homocysteine. Functionally, secondary metabolism regulator that controls the expression of the tenuazonic acid biosynthesis cluster. Methyltransferase that performs automethylation. No other methyl-accepting substrate has been identified yet. This Pyricularia oryzae (strain 70-15 / ATCC MYA-4617 / FGSC 8958) (Rice blast fungus) protein is Secondary metabolism regulator LAE1.